The chain runs to 169 residues: Disulfide bond formation protein B (169 aa).

The Cytoplasmic portion of the chain corresponds to 1–14 (MNNLTLSLRRERRL). A helical membrane pass occupies residues 15 to 31 (LVLLALVCLALLAGALY). The Periplasmic portion of the chain corresponds to 32 to 49 (LQYVKNEDPCPLCIIQRY). A disulfide bridge links Cys-41 with Cys-44. A helical membrane pass occupies residues 50-64 (FFVLIAVFAFIGAGM). The Cytoplasmic portion of the chain corresponds to 65 to 71 (ASGAGVA). Residues 72–89 (VTEALIVLSAAAGVGTAA) form a helical membrane-spanning segment. The Periplasmic segment spans residues 90–144 (RHLYVQLNPGFSCGFDALQPVVDSLPPARWLPGVFKVAGLCETVYPPIFGILLPG). Residues Cys-102 and Cys-130 are joined by a disulfide bond. The helical transmembrane segment at 145-163 (WALIAFVLIAVPVAVSLLR) threads the bilayer. Residues 164-169 (HRGRLR) are Cytoplasmic-facing.

The protein belongs to the DsbB family.

The protein resides in the cell inner membrane. In terms of biological role, required for disulfide bond formation in some periplasmic proteins. Acts by oxidizing the DsbA protein. The polypeptide is Disulfide bond formation protein B (Burkholderia mallei (strain ATCC 23344)).